The sequence spans 290 residues: MAIDPNSIGAVTEPMLFEWTDRDTLLYAIGVGAGTGDLAFTTENSHGIDQQVLPTYAVICCPAFGAAAKVGTFNPAALLHGSQGIRLHAPLPAAGKLSVVTEVADIQDKGEGKNAIVVLRGRGCDPESGSLVAETLTTLVLRGQGGFGGARGERPAAPEFPDRHPDARIDMPTREDQALIYRLSGDRNPLHSDPWFATQLAGFPKPILHGLCTYGVAGRALVAELGGGVAANITSIAARFTKPVFPGETLSTVIWRTEPGRAVFRTEVAGSDGAEARVVLDDGAVEYVAG.

The disordered stretch occupies residues Phe147 to Ile169. Residues Arg151–Ile169 show a composition bias toward basic and acidic residues. The MaoC-like domain maps to Pro161–Ser271.

This sequence belongs to the enoyl-CoA hydratase/isomerase family.

The enzyme catalyses a (3R)-3-hydroxyacyl-CoA = a (2E)-enoyl-CoA + H2O. It catalyses the reaction (3R)-hydroxyhexanoyl-CoA = (2E)-hexenoyl-CoA + H2O. It carries out the reaction (2E)-octenoyl-CoA + H2O = (3R)-hydroxyoctanoyl-CoA. The catalysed reaction is (3R)-3-hydroxydecanoyl-CoA = (2E)-decenoyl-CoA + H2O. The enzyme catalyses (3R)-3-hydroxydodecanoyl-CoA = (2E)-dodecenoyl-CoA + H2O. It catalyses the reaction (3R)-hydroxyhexadecanoyl-CoA = (2E)-hexadecenoyl-CoA + H2O. Its function is as follows. Shows trans-enoyl-CoA hydratase/3-hydroxyacyl-CoA dehydratase activity. In vitro, can hydrate various enoyl-CoA such as (2E)-hexenoyl-CoA, (2E)-octenoyl-CoA, (2E)-decenoyl-CoA, (2E)-dodecenoyl-CoA and (2E)-hexadecenoyl-CoA. May contribute to the persistence of the tuberculosis infection by inducing COX-2 expression in macrophages through MAPK-NF-kappaB signaling pathway. In Mycobacterium tuberculosis (strain ATCC 25618 / H37Rv), this protein is 3-hydroxyacyl-thioester dehydratase Y.